Here is a 106-residue protein sequence, read N- to C-terminus: Acylphosphatase-2 (106 aa).

The 91-residue stretch at 16-106 folds into the Acylphosphatase-like domain; that stretch reads SVDYEVFGTV…LEYSDFSIRY (91 aa). Catalysis depends on residues R31 and N49. At S100 the chain carries Phosphoserine.

The protein belongs to the acylphosphatase family.

The catalysed reaction is an acyl phosphate + H2O = a carboxylate + phosphate + H(+). The chain is Acylphosphatase-2 (Acyp2) from Mus musculus (Mouse).